The following is a 678-amino-acid chain: UvrABC system protein B (678 aa).

Positions Glu31 to Val417 constitute a Helicase ATP-binding domain. Gly44–Thr51 contacts ATP. A Beta-hairpin motif is present at residues Tyr97–Ile120. Positions Gln436–Leu602 constitute a Helicase C-terminal domain. The interval Asp603–Ala625 is disordered. The UVR domain occupies Gln638–Gln673.

Belongs to the UvrB family. In terms of assembly, forms a heterotetramer with UvrA during the search for lesions. Interacts with UvrC in an incision complex.

It localises to the cytoplasm. Functionally, the UvrABC repair system catalyzes the recognition and processing of DNA lesions. A damage recognition complex composed of 2 UvrA and 2 UvrB subunits scans DNA for abnormalities. Upon binding of the UvrA(2)B(2) complex to a putative damaged site, the DNA wraps around one UvrB monomer. DNA wrap is dependent on ATP binding by UvrB and probably causes local melting of the DNA helix, facilitating insertion of UvrB beta-hairpin between the DNA strands. Then UvrB probes one DNA strand for the presence of a lesion. If a lesion is found the UvrA subunits dissociate and the UvrB-DNA preincision complex is formed. This complex is subsequently bound by UvrC and the second UvrB is released. If no lesion is found, the DNA wraps around the other UvrB subunit that will check the other stand for damage. The protein is UvrABC system protein B of Mannheimia succiniciproducens (strain KCTC 0769BP / MBEL55E).